We begin with the raw amino-acid sequence, 270 residues long: Probable septum site-determining protein MinC (270 aa).

The disordered stretch occupies residues 105–129; it reads DRRAPSSKAADEAPVQQAEPAAPAA. Residues 116-129 are compositionally biased toward low complexity; sequence EAPVQQAEPAAPAA.

This sequence belongs to the MinC family. As to quaternary structure, interacts with MinD and FtsZ.

Cell division inhibitor that blocks the formation of polar Z ring septums. Rapidly oscillates between the poles of the cell to destabilize FtsZ filaments that have formed before they mature into polar Z rings. Prevents FtsZ polymerization. The sequence is that of Probable septum site-determining protein MinC from Burkholderia pseudomallei (strain 1106a).